We begin with the raw amino-acid sequence, 360 residues long: Photosystem II protein D1 (360 aa).

3 consecutive transmembrane segments (helical) span residues 29 to 46, 118 to 133, and 142 to 156; these read YIGW…TATT, HFLL…QWEL, and WICV…AATA. His-118 provides a ligand contact to chlorophyll a. A pheophytin a-binding site is contributed by Tyr-126. [CaMn4O5] cluster-binding residues include Asp-170 and Glu-189. The helical transmembrane segment at 197 to 218 threads the bilayer; the sequence is FHMLGVAGVFGGSLFSAMHGSL. His-198 is a chlorophyll a binding site. Residues His-215 and 264-265 contribute to the a quinone site; that span reads SF. Residue His-215 participates in Fe cation binding. His-272 provides a ligand contact to Fe cation. A helical transmembrane segment spans residues 274 to 288; the sequence is FLGAWPVIGIWFTAM. [CaMn4O5] cluster contacts are provided by His-332, Glu-333, Asp-342, and Ala-344. A propeptide spanning residues 345 to 360 is cleaved from the precursor; that stretch reads SGEQAPVALIAPAING.

It belongs to the reaction center PufL/M/PsbA/D family. As to quaternary structure, PSII is composed of 1 copy each of membrane proteins PsbA, PsbB, PsbC, PsbD, PsbE, PsbF, PsbH, PsbI, PsbJ, PsbK, PsbL, PsbM, PsbT, PsbX, PsbY, PsbZ, Psb30/Ycf12, peripheral proteins PsbO, CyanoQ (PsbQ), PsbU, PsbV and a large number of cofactors. It forms dimeric complexes. The D1/D2 heterodimer binds P680, chlorophylls that are the primary electron donor of PSII, and subsequent electron acceptors. It shares a non-heme iron and each subunit binds pheophytin, quinone, additional chlorophylls, carotenoids and lipids. D1 provides most of the ligands for the Mn4-Ca-O5 cluster of the oxygen-evolving complex (OEC). There is also a Cl(-1) ion associated with D1 and D2, which is required for oxygen evolution. The PSII complex binds additional chlorophylls, carotenoids and specific lipids. is required as a cofactor. In terms of processing, tyr-161 forms a radical intermediate that is referred to as redox-active TyrZ, YZ or Y-Z. Post-translationally, C-terminally processed by CtpA; processing is essential to allow assembly of the oxygen-evolving complex and thus photosynthetic growth.

The protein localises to the cellular thylakoid membrane. The catalysed reaction is 2 a plastoquinone + 4 hnu + 2 H2O = 2 a plastoquinol + O2. Its function is as follows. Photosystem II (PSII) is a light-driven water:plastoquinone oxidoreductase that uses light energy to abstract electrons from H(2)O, generating O(2) and a proton gradient subsequently used for ATP formation. It consists of a core antenna complex that captures photons, and an electron transfer chain that converts photonic excitation into a charge separation. The D1/D2 (PsbA/PsbD) reaction center heterodimer binds P680, the primary electron donor of PSII as well as several subsequent electron acceptors. This chain is Photosystem II protein D1, found in Microcystis aeruginosa (strain NIES-843 / IAM M-2473).